A 302-amino-acid polypeptide reads, in one-letter code: 4-hydroxy-tetrahydrodipicolinate synthase (302 aa).

Thr-55 is a pyruvate binding site. The active-site Proton donor/acceptor is the Tyr-144. Lys-172 functions as the Schiff-base intermediate with substrate in the catalytic mechanism. Pyruvate is bound at residue Val-214.

The protein belongs to the DapA family. As to quaternary structure, homotetramer; dimer of dimers.

The protein localises to the cytoplasm. The enzyme catalyses L-aspartate 4-semialdehyde + pyruvate = (2S,4S)-4-hydroxy-2,3,4,5-tetrahydrodipicolinate + H2O + H(+). It participates in amino-acid biosynthesis; L-lysine biosynthesis via DAP pathway; (S)-tetrahydrodipicolinate from L-aspartate: step 3/4. Its function is as follows. Catalyzes the condensation of (S)-aspartate-beta-semialdehyde [(S)-ASA] and pyruvate to 4-hydroxy-tetrahydrodipicolinate (HTPA). The polypeptide is 4-hydroxy-tetrahydrodipicolinate synthase (Prochlorococcus marinus (strain MIT 9211)).